The chain runs to 700 residues: Elongation factor G 1 (700 aa).

The region spanning 8 to 290 (QNYRNIGISA…AVIEFMPSPI (283 aa)) is the tr-type G domain. Residues 17 to 24 (AHIDAGKT), 88 to 92 (DTPGH), and 142 to 145 (NKMD) each bind GTP.

This sequence belongs to the TRAFAC class translation factor GTPase superfamily. Classic translation factor GTPase family. EF-G/EF-2 subfamily.

The protein localises to the cytoplasm. Catalyzes the GTP-dependent ribosomal translocation step during translation elongation. During this step, the ribosome changes from the pre-translocational (PRE) to the post-translocational (POST) state as the newly formed A-site-bound peptidyl-tRNA and P-site-bound deacylated tRNA move to the P and E sites, respectively. Catalyzes the coordinated movement of the two tRNA molecules, the mRNA and conformational changes in the ribosome. This chain is Elongation factor G 1, found in Polaromonas sp. (strain JS666 / ATCC BAA-500).